Reading from the N-terminus, the 540-residue chain is MLO protein homolog 1 (540 aa).

Residues 1–16 (MAGGRSGSRELPETPT) are Extracellular-facing. Residues 17–37 (WAVAVVCAVLVLVSVAMEHGL) traverse the membrane as a helical segment. Topologically, residues 38-60 (HNLSHWFRRRQKKAMGDALDKIK) are cytoplasmic. A helical membrane pass occupies residues 61 to 81 (AELMLLGFISLLLTVAQAPIS). At 82–142 (KICIPKSAAN…MSAKSMHQLH (61 aa)) the chain is on the extracellular side. A helical membrane pass occupies residues 143–163 (IFIFVLAVFHVTYCVITMGLG). Topologically, residues 164–265 (RLKMKKWKKW…IKRSLEDDFK (102 aa)) are cytoplasmic. The helical transmembrane segment at 266–286 (VVVGISLPLWFVGILVLFLDI) threads the bilayer. A topological domain (extracellular) is located at residue His287. A helical membrane pass occupies residues 288-308 (GLGTLIWISFVPLIIVLLVGT). Topologically, residues 309–347 (KLEMVIMQMAQEIQDRATVIQGAPVVEPSNKYFWFNRPD) are cytoplasmic. A helical membrane pass occupies residues 348 to 368 (WVLFFIHLTLFHNAFQMAHFV). Residues 369–383 (WTMATPGLKKCFHEN) lie on the Extracellular side of the membrane. Residues 384–404 (IWLSIVEVIVGISLQVLCSYI) form a helical membrane-spanning segment. Over 405 to 540 (TFPLYALVTQ…DSDFSFSAQR (136 aa)) the chain is Cytoplasmic. Residues 426–447 (EQTMKALMNWRKKAMEKKKVRD) are calmodulin-binding. The interval 468–526 (ASPVHLLQDHRARSDDPPSPITVASPPAPEEDIYPVPAAAASRQLLDDPPDRRWMASSS) is disordered. 2 stretches are compositionally biased toward basic and acidic residues: residues 474–483 (LQDHRARSDD) and 512–521 (LLDDPPDRRW).

Belongs to the MLO family.

It localises to the membrane. In terms of biological role, may be involved in modulation of pathogen defense and leaf cell death. Activity seems to be regulated by Ca(2+)-dependent calmodulin binding and seems not to require heterotrimeric G proteins. This Oryza sativa subsp. japonica (Rice) protein is MLO protein homolog 1 (MLO1).